Here is a 424-residue protein sequence, read N- to C-terminus: L-threonine:uridine-5'-aldehyde transaldolase (424 aa).

K235 carries the N6-(pyridoxal phosphate)lysine modification.

Belongs to the SHMT family. Requires pyridoxal 5'-phosphate as cofactor.

It catalyses the reaction uridine-5'-aldehyde + L-threonine = (5'S,6'S)-C-glycyluridine + acetaldehyde. It functions in the pathway antibiotic biosynthesis. Functionally, transaldolase involved in the biosynthesis of the lipopeptidyl nucleoside antibiotic A-90289. Catalyzes the condensation of L-threonine and uridine-5'-aldehyde to form 5'-C-glycyluridine (GlyU). Forms (5'S,6'S)-GlyU. Has no activity with alternative amino acids, such as glycine or serine. This is L-threonine:uridine-5'-aldehyde transaldolase from Streptomyces sp.